The sequence spans 245 residues: TLC domain-containing protein 5 (245 aa).

6 helical membrane passes run 1–21 (MALALCLQVLCSLCGWLSLYI), 38–58 (LVTFTHGVLSIGLSAYIGFID), 75–95 (VHVLCLTLGYFIFDLGWCVYF), 99–119 (GALMLAHHTLSILGIIMALVL), 162–182 (FLFVALFTGVRIGVGACLLFC), and 191–211 (WFVKAGGVAMYAVSWCFMFSI). The 176-residue stretch at 29 to 204 (HRSYEWSCRL…AGGVAMYAVS (176 aa)) folds into the TLC domain.

Belongs to the TLCD5 family.

The protein localises to the membrane. The chain is TLC domain-containing protein 5 from Homo sapiens (Human).